Reading from the N-terminus, the 350-residue chain is GTPase Obg (350 aa).

The 159-residue stretch at 1 to 159 (MKLVDEAEIL…RLLKLELRLL (159 aa)) folds into the Obg domain. Positions 127–146 (NMHFKSSVNRAPRQSTTGEE) are disordered. Polar residues predominate over residues 130-143 (FKSSVNRAPRQSTT). Residues 160 to 337 (ADVGLLGFPN…IMKDVMAFFD (178 aa)) form the OBG-type G domain. Residues 166-173 (GFPNAGKS), 191-195 (FTTLY), 213-216 (DVPG), 287-290 (NKAD), and 318-320 (SAL) each bind GTP. 2 residues coordinate Mg(2+): Ser-173 and Thr-193.

The protein belongs to the TRAFAC class OBG-HflX-like GTPase superfamily. OBG GTPase family. Monomer. Mg(2+) is required as a cofactor.

It is found in the cytoplasm. Functionally, an essential GTPase which binds GTP, GDP and possibly (p)ppGpp with moderate affinity, with high nucleotide exchange rates and a fairly low GTP hydrolysis rate. Plays a role in control of the cell cycle, stress response, ribosome biogenesis and in those bacteria that undergo differentiation, in morphogenesis control. This is GTPase Obg from Xanthomonas oryzae pv. oryzae (strain MAFF 311018).